A 973-amino-acid polypeptide reads, in one-letter code: MEEHIPLPSQYESPKALPPRVPSSRWLRSLRPRLANSCLALKIRAHESLVKIRLCKPYDAQSRSKIIEKVIERRETRKTLAHQLKDLKLVPVARDHTHGRAAKFRTSANIWMNEAMRAAGYEPYNVSMSNHDIERGNRYFYFAKDLTIPYRNDPVSDNTGFVFCDVDYYADMEKWMQHFKPMLLYTLVPESLSYHCDDHSFHVNDDRVFFDVRGGASYSHQLWDYTGDTICVRGKNKELLVFTIEQKCIQGDPHRRIIFLEPAARVAWPFYKPMKVEVGLKRKCMTAGQVNVLYEPIDDKISLSASGSRHTVETTGRTLAAITARMKNKTSPPMVADVERILRDAGDKEACVNAPILFELIPEAKFRVNVVKTTATPTHFQPLGPLRTEDGETCGHAVTTTLATAPALLPMRGVNSDVATVNGRVKKPANTVIPFKEYKEYASEFVEFLVPEPGVGHPWDTAAVREVQDNRQQKARINMVAATVSTHSSNRLKAFIKAEAYAATNDPRNITTMAPELTLMMSCFTYAFKEKILYEQPWYGPGKTPKQVGRRLQSIAKHGTLESDYSRFDGSISEWLQKNVVKAAYMRFFKEHQRTEFQSWFSKVFMQMGTTTAGVRYEAGWGTRSGSPITTDGNTMLNAFVVYCCYRKLCHTPAEAWRKLSQGALLTGDDAVLAHENGLEPALLDVVKNLGLKVEAKVNGPDDPVSFCGRIYPRLSDCITSFQDPLRTIPKLHLTTNKGVSPEQAAANRAHGYLATDKATPIIGTWARRVIELTGDLKVKGATREEQYKLSNAHQQLDPSLIETAMANILGIDVGELKALDKAVSEAKALDQMPVVLGNCYKHKIEAVVGGEVVGPGPRVETVEPNHEQSSGTPEVVPEMAGHSERRDKSSNPRPGGKAEGLSSKAGKPRVPTRPAADRKAAAGSGNRRGPTNGRRPIRDRAPRGGGRPNPGTTPPVSNSETTTTTAVVHASA.

The capping stretch occupies residues 96–264; it reads HTHGRAAKFR…RRIIFLEPAA (169 aa). Residues 558–683 form the RdRp catalytic domain; sequence HGTLESDYSR…AHENGLEPAL (126 aa). The active-site For RdRp/TNTase activity is aspartate 669. Residues 853-973 are disordered; sequence VVGPGPRVET…TTTAVVHASA (121 aa). A compositionally biased stretch (basic and acidic residues) spans 882–891; that stretch reads GHSERRDKSS. 2 stretches are compositionally biased toward low complexity: residues 924 to 935 and 955 to 973; these read GSGNRRGPTNGR and PPVS…HASA.

It belongs to the nodaviridae RNA polymerase family. In terms of assembly, homododecamer. Forms 2 stacked rings of 35-nm in diameter, arranged in a crown-like structure at the opening of virus-induced replication vesicles. Interacts with protein B2. The cofactor is Mn(2+).

It is found in the host mitochondrion outer membrane. The catalysed reaction is RNA(n) + a ribonucleoside 5'-triphosphate = RNA(n+1) + diphosphate. In terms of biological role, RNA-dependent RNA polymerase, which replicates the viral genome composed of 2 RNA segments, RNA1 and RNA2. Does not need an exogenous primer. Also possesses a terminal nucleotidyl transferase (TNTase) activity. The TNTase catalyzes the addition of nucleotide to the 3'-end of plus- and minus-stranded RNAs, probably to repair the 3'-end nucleotide loss. Forms the open necked connection to the cytosol of the virus-induced replication vesicles. Mediates viral RNA1 recruitment. This Spodoptera eridania (Southern armyworm) protein is RNA-directed RNA polymerase.